The primary structure comprises 23 residues: Malate dehydrogenase (23 aa).

It belongs to the LDH/MDH superfamily. MDH type 2 family.

The enzyme catalyses (S)-malate + NAD(+) = oxaloacetate + NADH + H(+). Its function is as follows. Catalyzes the reversible oxidation of malate to oxaloacetate. This chain is Malate dehydrogenase (mdh), found in Thermoleophilum album.